We begin with the raw amino-acid sequence, 968 residues long: Polycystin-2 (968 aa).

Residues 1–11 (MVNSSRVQPQQ) are compositionally biased toward polar residues. Disordered regions lie at residues 1–28 (MVNSSRVQPQQPGDAKRPPAPRAPDPGR) and 58–181 (RIRQ…LPLE). Topologically, residues 1-219 (MVNSSRVQPQ…STNREKYLKS (219 aa)) are cytoplasmic. Over residues 62-83 (AAARDPPAGAAASPSPPLSSCS) the composition is skewed to low complexity. 2 positions are modified to phosphoserine: S76 and S80. Acidic residues predominate over residues 95–107 (EAEEEEEEVEGEE). Low complexity predominate over residues 123–139 (RRSAASSAVSSVGARSR). The residue at position 137 (R137) is an Omega-N-methylarginine. The helical transmembrane segment at 220 to 241 (VLRELVTYLLFLIVLCILTYGM) threads the bilayer. At 242–468 (MSSNVYYYTR…PLKLIRYVTT (227 aa)) the chain is on the extracellular side. 2 N-linked (GlcNAc...) asparagine glycosylation sites follow: N299 and N305. A glycan (N-linked (GlcNAc...) (complex) asparagine) is linked at N328. A disulfide bond links C331 and C344. N-linked (GlcNAc...) asparagine glycosylation is found at N362 and N375. Residues 469 to 489 (FDFFLAACEIIFCFFIFYYVV) form a helical membrane-spanning segment. The Cytoplasmic segment spans residues 490–505 (EEILEIRIHKLHYFRS). The chain crosses the membrane as a helical span at residues 506 to 526 (FWNCLDVVIVVLSVVAIGINI). Over 527–552 (YRTSNVEVLLQFLEDQNTFPNFEHLA) the chain is Extracellular. Residues 553–573 (YWQIQFNNIAAVTVFFVWIKL) traverse the membrane as a helical segment. Q557 contacts cholesterol. At 574–597 (FKFINFNRTMSQLSTTMSRCAKDL) the chain is on the cytoplasmic side. A helical transmembrane segment spans residues 598-619 (FGFAIMFFIIFLAYAQLAYLVF). Residues 620-631 (GTQVDDFSTFQE) lie on the Extracellular side of the membrane. Positions 632–646 (CIFTQFRIILGDINF) form an intramembrane region, pore-forming. L641 provides a ligand contact to Ca(2+). A Selectivity filter motif is present at residues 641–643 (LGD). Residues 647 to 654 (AEIEEANR) are Extracellular-facing. Residues 655 to 675 (VLGPIYFTTFVFFMFFILLNM) traverse the membrane as a helical segment. At 676–968 (FLAIINDTYS…GGNGSSNVHV (293 aa)) the chain is on the cytoplasmic side. Residues 750 to 785 (HTDAEIEAIFTKYDQDGDQELTEHEHQQMRDDLEKE) enclose the EF-hand domain. Ca(2+) is bound by residues D763, D765, D767, E769, and E774. Residues 764–831 (QDGDQELTEH…HSSRRRGSIS (68 aa)) form a disordered region. Residues 770–795 (LTEHEHQQMRDDLEKEREDLDLDHSS) show a composition bias toward basic and acidic residues. Low complexity predominate over residues 796–807 (LPRPMSSRSFPR). 4 positions are modified to phosphoserine: S801, S808, S812, and S829. Residues 803–822 (RSFPRSLDDSEEDDDEDSGH) are linker. Positions 810 to 821 (DDSEEDDDEDSG) are important for interaction with PACS1 and PACS2. Residues 833–872 (GVSYEEFQVLVRRVDRMEHSIGSIVSKIDAVIVKLEIMER) are a coiled coil. The disordered stretch occupies residues 917–968 (ESDDAASQISHGLGTPVGLNGQPRPRSSRPSSSQSTEGMEGAGGNGSSNVHV). Low complexity predominate over residues 938-951 (QPRPRSSRPSSSQS).

This sequence belongs to the polycystin family. As to quaternary structure, homotetramer. Component of the heterotetrameric polycystin channel complex with PKD1; the tetramer contains one PKD1 chain and three PKD2 chains. Isoform 1 interacts with PKD1 while isoform 3 does not. Interacts with PKD1L1; probably forms a Ca(2+) channel. Interacts with CD2AP. Interacts with HAX1. Interacts with NEK8. Part of a complex containing AKAP5, ADCY5, ADCY6 and PDE4C. Interacts (via C-terminus) with TRPV4 (via C-terminus). Interacts (via C-terminal acidic region) with PACS1 and PACS2; these interactions retain the protein in the endoplasmic reticulum and prevent trafficking to the cell membrane. Interacts with TMEM33. Form a heterotetramer with TRPC1 with a 2:2 stoichiometry; has distinct channel properties separate from PKD2 or TRPC1 homomers alone. Interacts with TMEM120A; TMEM120A inhibits PKD2 channel activity through the physical association of PKD2 with TMEM120A. Interacts (via N-terminus) with RYR2; regulates RYR2 channel activity. Phosphorylated. Phosphorylation is important for protein function; a mutant that lacks the N-terminal phosphorylation sites cannot complement a zebrafish pkd2-deficient mutant. PKD-mediated phosphorylation at the C-terminus regulates its function in the release of Ca(2+) stores from the endoplasmic reticulum. Phosphorylation at Ser-812 regulates PKD2 trafficking. Phosphorylation at Ser-76 is required for PKD2 trafficking to or retention at the lateral plasma membrane. Phosphorylation at Ser-801, Ser-812 and Ser-829 regulates PKD2 channel activity. Post-translationally, N-glycosylated. The four subunits in a tetramer probably differ in the extent of glycosylation; simultaneous glycosylation of all experimentally validated sites would probably create steric hindrance. Thus, glycosylation at Asn-305 is not compatible with glycosylation at Asn-328; only one of these two residues is glycosylated at a given time. In terms of processing, sumoylated by SUMO1; sumoylation regulates PKD2 membrane recycling and is necessary for intravascular pressure-induced arterial contractility. In terms of tissue distribution, detected in fetal and adult kidney. Detected at the thick ascending limb of the loop of Henle, at distal tubules, including the distal convoluted tubule and cortical collecting tubules, with weak staining of the collecting duct. Detected on placenta syncytiotrophoblasts (at protein level). Strongly expressed in ovary, fetal and adult kidney, testis, and small intestine. Not detected in peripheral leukocytes.

It localises to the cell projection. Its subcellular location is the cilium membrane. The protein resides in the endoplasmic reticulum membrane. The protein localises to the cell membrane. It is found in the basolateral cell membrane. It localises to the cytoplasmic vesicle membrane. Its subcellular location is the golgi apparatus. The protein resides in the vesicle. The protein localises to the secreted. It is found in the extracellular exosome. It carries out the reaction K(+)(in) = K(+)(out). The enzyme catalyses Na(+)(in) = Na(+)(out). The catalysed reaction is Ca(2+)(in) = Ca(2+)(out). Its activity is regulated as follows. Channel activity is regulated by phosphorylation. Channel activity is regulated by intracellular Ca(2+). At the endoplasmic reticulum membrane (ER), TMEM33 enhances its channel activity. TMEM120A inhibits the channel activity of PKD2, and mediates mechanosensitivity of the PKD2-TMEM120A channel complex. PKD1/PKD2 complex on the plasma membrane is activated by PKD1 N-terminus. Its function is as follows. Forms a nonselective cation channel. Can function as a homotetrameric ion channel or can form heteromer with PKD1. Displays distinct function depending on its subcellular localization and regulation by its binding partners. In primary cilium functions as a cation channel, with a preference for monovalent cations over divalent cations that allows K(+), Na(+) and Ca(2+) influx, with low selectivity for Ca(2+). Involved in fluid-flow mechanosensation by the primary cilium in renal epithelium. In the endoplasmic reticulum, likely functions as a K(+) channel to facilitate Ca(2+) release. The heterotetrameric PKD1/PKD2 channel has higher Ca(2+) permeability than homomeric PKD2 channel and acts as a primarily Ca(2+)-permeable channel. Interacts with and acts as a regulator of a number of other channels, such as TRPV4, TRPC1, IP3R, RYR2, ultimately further affecting intracellular signaling, to modulate intracellular Ca(2+) signaling. Together with TRPV4, forms mechano- and thermosensitive channels in cilium. In cardiomyocytes, PKD2 modulates Ca(2+) release from stimulated RYR2 receptors through direct association. Also involved in left-right axis specification via its role in sensing nodal flow; forms a complex with PKD1L1 in cilia to facilitate flow detection in left-right patterning. Acts as a regulator of cilium length together with PKD1. Mediates systemic blood pressure and contributes to the myogenic response in cerebral arteries though vasoconstriction. This Homo sapiens (Human) protein is Polycystin-2.